The following is a 277-amino-acid chain: MLQPEIIEFLASTTPQILAKNIPVTENRESKRHDIQQKAEAGEEKAVSPFEFRPQRLRFAVEDEYFEDGDINRHMYLQNIVTSFVDDKQPPTISEFRCHIAGCKQLFDTLEGYEHHYNALHRNVCSNCKRSFPSNRLLEIHILEWHDSLFQIMAEKQCMYECLVEGCGLKFKTSKERKDHLIRTHSYPADFRFDKSKKIGRTTEKKTQQKKDAHMEVSATVLQQESSESMDFSLTPEPVETEPMQAANLKPRYSYKVPSSICFGQGSVRGFRGRRKK.

3 consecutive C2H2-type zinc fingers follow at residues 96-121 (FRCH…NALH), 123-146 (NVCS…LEWH), and 160-185 (YECL…IRTH). Residues 225 to 244 (ESSESMDFSLTPEPVETEPM) are disordered.

This sequence belongs to the krueppel C2H2-type zinc-finger protein family.

The protein resides in the nucleus. Its function is as follows. May be involved in transcriptional regulation. The chain is Zinc finger protein 511 (znf511) from Danio rerio (Zebrafish).